The following is a 351-amino-acid chain: N-acetyl-gamma-glutamyl-phosphate reductase (351 aa).

Cys-154 is a catalytic residue.

This sequence belongs to the NAGSA dehydrogenase family. Type 1 subfamily.

It localises to the cytoplasm. The catalysed reaction is N-acetyl-L-glutamate 5-semialdehyde + phosphate + NADP(+) = N-acetyl-L-glutamyl 5-phosphate + NADPH + H(+). The protein operates within amino-acid biosynthesis; L-arginine biosynthesis; N(2)-acetyl-L-ornithine from L-glutamate: step 3/4. In terms of biological role, catalyzes the NADPH-dependent reduction of N-acetyl-5-glutamyl phosphate to yield N-acetyl-L-glutamate 5-semialdehyde. The sequence is that of N-acetyl-gamma-glutamyl-phosphate reductase from Prochlorococcus marinus subsp. pastoris (strain CCMP1986 / NIES-2087 / MED4).